A 427-amino-acid chain; its full sequence is Serine hydroxymethyltransferase (427 aa).

Residues Leu-124 and 128-130 (GHL) each bind (6S)-5,6,7,8-tetrahydrofolate. Lys-233 is subject to N6-(pyridoxal phosphate)lysine.

It belongs to the SHMT family. In terms of assembly, homodimer. It depends on pyridoxal 5'-phosphate as a cofactor.

Its subcellular location is the cytoplasm. The enzyme catalyses (6R)-5,10-methylene-5,6,7,8-tetrahydrofolate + glycine + H2O = (6S)-5,6,7,8-tetrahydrofolate + L-serine. The protein operates within one-carbon metabolism; tetrahydrofolate interconversion. Its pathway is amino-acid biosynthesis; glycine biosynthesis; glycine from L-serine: step 1/1. Functionally, catalyzes the reversible interconversion of serine and glycine with tetrahydrofolate (THF) serving as the one-carbon carrier. This reaction serves as the major source of one-carbon groups required for the biosynthesis of purines, thymidylate, methionine, and other important biomolecules. Also exhibits THF-independent aldolase activity toward beta-hydroxyamino acids, producing glycine and aldehydes, via a retro-aldol mechanism. The protein is Serine hydroxymethyltransferase of Paracoccus denitrificans (strain Pd 1222).